A 218-amino-acid chain; its full sequence is Small ribosomal subunit protein uS3 (218 aa).

Residues valine 38–lysine 107 form the KH type-2 domain.

The protein belongs to the universal ribosomal protein uS3 family. In terms of assembly, part of the 30S ribosomal subunit. Forms a tight complex with proteins S10 and S14.

Functionally, binds the lower part of the 30S subunit head. Binds mRNA in the 70S ribosome, positioning it for translation. The protein is Small ribosomal subunit protein uS3 of Exiguobacterium sibiricum (strain DSM 17290 / CCUG 55495 / CIP 109462 / JCM 13490 / 255-15).